The following is a 480-amino-acid chain: Glutamate--tRNA ligase (480 aa).

The 'HIGH' region signature appears at 21-31 (PSPTGYLHVGG). Residues cysteine 110, cysteine 112, cysteine 137, and histidine 139 each coordinate Zn(2+). A 'KMSKS' region motif is present at residues 248 to 252 (KLSKR). Lysine 251 is a binding site for ATP.

The protein belongs to the class-I aminoacyl-tRNA synthetase family. Glutamate--tRNA ligase type 1 subfamily. In terms of assembly, monomer. The cofactor is Zn(2+).

Its subcellular location is the cytoplasm. The enzyme catalyses tRNA(Glu) + L-glutamate + ATP = L-glutamyl-tRNA(Glu) + AMP + diphosphate. Functionally, catalyzes the attachment of glutamate to tRNA(Glu) in a two-step reaction: glutamate is first activated by ATP to form Glu-AMP and then transferred to the acceptor end of tRNA(Glu). In Mannheimia succiniciproducens (strain KCTC 0769BP / MBEL55E), this protein is Glutamate--tRNA ligase.